A 3977-amino-acid polypeptide reads, in one-letter code: Hybrid PKS-NRPS synthetase gkaA (3977 aa).

The Ketosynthase family 3 (KS3) domain maps to E4 to N441. Active-site for beta-ketoacyl synthase activity residues include C177, H316, and H361. One can recognise a Malonyl-CoA:ACP transacylase (MAT) domain in the interval V551 to D867. An N-terminal hotdog fold region spans residues N937–S1072. The 305-residue stretch at N937–D1241 folds into the PKS/mFAS DH domain. The active-site Proton acceptor; for dehydratase activity is H969. Positions L1087–D1241 are C-terminal hotdog fold. The active-site Proton donor; for dehydratase activity is D1147. Residues Y1286–E1580 are methyltransferase (cMeT) domain. Residues T2128–V2301 form the Ketoreductase (KR) domain. Residues S2409–M2490 form the Carrier 1 domain. S2450 carries the post-translational modification O-(pantetheine 4'-phosphoryl)serine. A disordered region spans residues H2497–V2542. Residues N2499–V2538 are compositionally biased toward polar residues. Positions E2584–E3018 are condensation. An adenylation region spans residues I3048–D3437. In terms of domain architecture, Carrier 2 spans F3552–S3632. S3592 carries the post-translational modification O-(pantetheine 4'-phosphoryl)serine. The Thioester reductase (TE) domain occupies L3672–V3890.

The protein in the C-terminal section; belongs to the NRP synthetase family. It depends on pantetheine 4'-phosphate as a cofactor.

The protein operates within mycotoxin biosynthesis. Its function is as follows. Hybrid PKS-NRPS synthetase; part of the gene cluster that mediates the biosynthesis of GKK1032, fungal natural products containing a macrocyclic para-cyclophane connected to a decahydrofluorene ring system that show potent antitumor activities. Within the pathway, the PKS-NRPS gkaA, with the help of the trans-enoyl reductase gkaC, synthesize the polyketide-tyrosyl acyl thioester product which can be reductively off-loaded by the terminal reductase (R) domain in gkaA. The PKS module of gkaA acts in combination with the trans-acting enoyl reductase gkaC to produce a methylated polyketide attached to the ACP domain. In parallel, the adenylation (A) domain of the NRPS module activated L-tyrosine, which is then transferred to the ACP domain. The condensation (C) domain subsequently links this group to the polyketide chain, forming an enzyme-bound amide. The alpha/beta hydrolase gkaG is then required to catalyze the subsequent Knoevenagel condensation that affords the 3-pyrrolin-2-one ring, whereas the three proteins gkaB, gkadX and gkaZ then function synergistically to form the cyclophane. The sequence is that of Hybrid PKS-NRPS synthetase gkaA from Penicillium citrinum.